The sequence spans 323 residues: Acetyl esterase (323 aa).

The short motif at 91-93 is the Involved in the stabilization of the negatively charged intermediate by the formation of the oxyanion hole element; sequence HGG. Active-site residues include Ser-165, Asp-262, and His-292.

The protein belongs to the 'GDXG' lipolytic enzyme family. Homodimer. Interacts with MalT and MelA.

Its subcellular location is the cytoplasm. In terms of biological role, displays esterase activity towards short chain fatty esters (acyl chain length of up to 8 carbons). Able to hydrolyze triacetylglycerol (triacetin) and tributyrylglycerol (tributyrin), but not trioleylglycerol (triolein) or cholesterol oleate. Negatively regulates MalT activity by antagonizing maltotriose binding. Inhibits MelA galactosidase activity. This is Acetyl esterase from Salmonella agona (strain SL483).